The following is a 355-amino-acid chain: Putative early 40.3 kDa protein (355 aa).

This protein is required for viral late gene expression. The sequence is that of Putative early 40.3 kDa protein (DA41) from Orgyia pseudotsugata multicapsid polyhedrosis virus (OpMNPV).